The primary structure comprises 89 residues: Small ribosomal subunit protein uS15 (89 aa).

Belongs to the universal ribosomal protein uS15 family. In terms of assembly, part of the 30S ribosomal subunit. Forms a bridge to the 50S subunit in the 70S ribosome, contacting the 23S rRNA.

Its function is as follows. One of the primary rRNA binding proteins, it binds directly to 16S rRNA where it helps nucleate assembly of the platform of the 30S subunit by binding and bridging several RNA helices of the 16S rRNA. In terms of biological role, forms an intersubunit bridge (bridge B4) with the 23S rRNA of the 50S subunit in the ribosome. The chain is Small ribosomal subunit protein uS15 from Corynebacterium glutamicum (strain R).